We begin with the raw amino-acid sequence, 230 residues long: Demethylmenaquinone methyltransferase (230 aa).

S-adenosyl-L-methionine is bound by residues threonine 57, aspartate 77, 101–102, and serine 118; that span reads DI.

It belongs to the class I-like SAM-binding methyltransferase superfamily. MenG/UbiE family.

It carries out the reaction a 2-demethylmenaquinol + S-adenosyl-L-methionine = a menaquinol + S-adenosyl-L-homocysteine + H(+). Its pathway is quinol/quinone metabolism; menaquinone biosynthesis; menaquinol from 1,4-dihydroxy-2-naphthoate: step 2/2. In terms of biological role, methyltransferase required for the conversion of demethylmenaquinol (DMKH2) to menaquinol (MKH2). The protein is Demethylmenaquinone methyltransferase of Chlamydia felis (strain Fe/C-56) (Chlamydophila felis).